A 313-amino-acid chain; its full sequence is Ubiquitin-conjugating enzyme E2 Z (313 aa).

One can recognise a UBC core domain in the interval 58-212 (QCVLRIKRDI…IRHETIRVAV (155 aa)). The active-site Glycyl thioester intermediate is cysteine 147. The segment at 283 to 313 (VREKHRKETVDIDSDSSSSETETDTQGSSNP) is disordered. Positions 297-313 (DSSSSETETDTQGSSNP) are enriched in low complexity.

This sequence belongs to the ubiquitin-conjugating enzyme family.

The protein resides in the cytoplasm. It is found in the nucleus. The enzyme catalyses S-ubiquitinyl-[E1 ubiquitin-activating enzyme]-L-cysteine + [E2 ubiquitin-conjugating enzyme]-L-cysteine = [E1 ubiquitin-activating enzyme]-L-cysteine + S-ubiquitinyl-[E2 ubiquitin-conjugating enzyme]-L-cysteine.. It functions in the pathway protein modification; protein ubiquitination. Catalyzes the covalent attachment of ubiquitin to other proteins. May be involved in apoptosis regulation. This chain is Ubiquitin-conjugating enzyme E2 Z (ube2z), found in Xenopus tropicalis (Western clawed frog).